We begin with the raw amino-acid sequence, 73 residues long: MTKISTAKTFFINGQEYYTTNTINLHDLLNYFDFNSSLLVLEYNNFICNKKNWEKIMISNNDKIEIVTIVGGG.

It belongs to the ycf40 family.

The protein localises to the plastid. Its subcellular location is the chloroplast. This is an uncharacterized protein from Trieres chinensis (Marine centric diatom).